Here is a 601-residue protein sequence, read N- to C-terminus: Elongation factor 4 (601 aa).

In terms of domain architecture, tr-type G spans 4–186; that stretch reads SFIRNFAIIA…SIVHLVPPPK (183 aa). Residues 16–21 and 133–136 each bind GTP; these read DHGKST and NKID.

This sequence belongs to the TRAFAC class translation factor GTPase superfamily. Classic translation factor GTPase family. LepA subfamily.

The protein localises to the cell inner membrane. It catalyses the reaction GTP + H2O = GDP + phosphate + H(+). Required for accurate and efficient protein synthesis under certain stress conditions. May act as a fidelity factor of the translation reaction, by catalyzing a one-codon backward translocation of tRNAs on improperly translocated ribosomes. Back-translocation proceeds from a post-translocation (POST) complex to a pre-translocation (PRE) complex, thus giving elongation factor G a second chance to translocate the tRNAs correctly. Binds to ribosomes in a GTP-dependent manner. This is Elongation factor 4 from Koribacter versatilis (strain Ellin345).